Reading from the N-terminus, the 201-residue chain is uncharacterized protein (201 aa).

An N-terminal signal peptide occupies residues 1–19; sequence MKLIVSVFLIGCQFLNILG.

This is an uncharacterized protein from Acheta domesticus (House cricket).